We begin with the raw amino-acid sequence, 363 residues long: Anhydro-N-acetylmuramic acid kinase (363 aa).

10 to 17 (GTSLDGLD) is an ATP binding site.

The protein belongs to the anhydro-N-acetylmuramic acid kinase family.

The catalysed reaction is 1,6-anhydro-N-acetyl-beta-muramate + ATP + H2O = N-acetyl-D-muramate 6-phosphate + ADP + H(+). It functions in the pathway amino-sugar metabolism; 1,6-anhydro-N-acetylmuramate degradation. It participates in cell wall biogenesis; peptidoglycan recycling. Functionally, catalyzes the specific phosphorylation of 1,6-anhydro-N-acetylmuramic acid (anhMurNAc) with the simultaneous cleavage of the 1,6-anhydro ring, generating MurNAc-6-P. Is required for the utilization of anhMurNAc either imported from the medium or derived from its own cell wall murein, and thus plays a role in cell wall recycling. Contributes to intrinsic fosfomycin resistance in P.putida. This chain is Anhydro-N-acetylmuramic acid kinase, found in Pseudomonas putida (strain ATCC 47054 / DSM 6125 / CFBP 8728 / NCIMB 11950 / KT2440).